Consider the following 630-residue polypeptide: Mesothelin (630 aa).

Positions 1-36 (MALPTARPLLGSCGTPALGSLLFLLFSLGWVQPSRT) are cleaved as a signal peptide. N-linked (GlcNAc...) asparagine glycosylation occurs at asparagine 57. At serine 200 the chain carries Phosphoserine; by FAM20C. Positions 262–286 (SIPQGIVAAWRQRSSRDPSWRQPER) are required for megakaryocyte-potentiating factor activity. A disulfide bridge links cysteine 302 with cysteine 326. N-linked (GlcNAc...) asparagine glycans are attached at residues asparagine 388, asparagine 496, and asparagine 523. Residue serine 606 is the site of GPI-anchor amidated serine attachment. A propeptide spans 607–630 (GTPCLLGPGPVLTVLALLLASTLA) (removed in mature form).

It belongs to the mesothelin family. As to quaternary structure, interacts with MUC16. In terms of processing, both MPF and the cleaved form of mesothelin are N-glycosylated. Proteolytically cleaved by a furin-like convertase to generate megakaryocyte-potentiating factor (MPF), and the cleaved form of mesothelin. In terms of tissue distribution, expressed in lung. Expressed at low levels in heart, placenta and kidney. Expressed in mesothelial cells. Highly expressed in mesotheliomas, ovarian cancers, and some squamous cell carcinomas (at protein level).

The protein localises to the cell membrane. Its subcellular location is the golgi apparatus. It localises to the secreted. Its function is as follows. Membrane-anchored forms may play a role in cellular adhesion. In terms of biological role, megakaryocyte-potentiating factor (MPF) potentiates megakaryocyte colony formation in vitro. In Homo sapiens (Human), this protein is Mesothelin (MSLN).